The primary structure comprises 250 residues: Proteasome subunit alpha type-7-like (250 aa).

The O-linked (GlcNAc) serine glycan is linked to serine 132.

This sequence belongs to the peptidase T1A family. The 26S proteasome consists of a 20S proteasome core and two 19S regulatory subunits. The 20S proteasome core is a barrel-shaped complex made of 28 subunits that are arranged in four stacked rings. The two outer rings are each formed by seven alpha subunits, and the two inner rings are formed by seven beta subunits. The proteolytic activity is exerted by three beta-subunits PSMB5, PSMB6 and PSMB7. PSMA7 interacts directly with the PSMG1-PSMG2 heterodimer which promotes 20S proteasome assembly. Interacts with HIF1A. Interacts with RAB7A. Interacts with PRKN. Interacts with ABL1 and ABL2. Interacts with EMAP2. Interacts with MAVS.

It is found in the cytoplasm. Its subcellular location is the nucleus. Component of the 20S core proteasome complex involved in the proteolytic degradation of most intracellular proteins. This complex plays numerous essential roles within the cell by associating with different regulatory particles. Associated with two 19S regulatory particles, forms the 26S proteasome and thus participates in the ATP-dependent degradation of ubiquitinated proteins. The 26S proteasome plays a key role in the maintenance of protein homeostasis by removing misfolded or damaged proteins that could impair cellular functions, and by removing proteins whose functions are no longer required. Associated with the PA200 or PA28, the 20S proteasome mediates ubiquitin-independent protein degradation. This type of proteolysis is required in several pathways including spermatogenesis (20S-PA200 complex) or generation of a subset of MHC class I-presented antigenic peptides (20S-PA28 complex). Inhibits the transactivation function of HIF-1A under both normoxic and hypoxia-mimicking conditions. The interaction with EMAP2 increases the proteasome-mediated HIF-1A degradation under the hypoxic conditions. Plays a role in hepatitis C virus internal ribosome entry site-mediated translation. Mediates nuclear translocation of the androgen receptor (AR) and thereby enhances androgen-mediated transactivation. Promotes MAVS degradation and thereby negatively regulates MAVS-mediated innate immune response. The protein is Proteasome subunit alpha type-7-like (PSMA7L) of Macaca fascicularis (Crab-eating macaque).